The following is a 251-amino-acid chain: MATSVLLACGLNEQKLPGFVHISEESNVDASFLISCVLGQRLRISNAGTLLVCLQHHYQHYFNAGMRLGYNTNIFQGKTLGVIDVLSDMAGEGLASKWLTNTEGQTLTDQLVEDIRAQVERNYASRNSYTVLIDNLSILFNLGASKLQVQQFCQDLAALGKEREKLTVITKLSNSDIYQLTDNNVAKLGQVRIQVLRLKSGVFREVDGKLLIERVLDEGNYACEETRKEVLYKVNDRNVKVFAPGEIGVKV.

This sequence belongs to the ELP6 family. As to quaternary structure, component of the elongator complex composed of Elp1, Elp2, Elp3, Elp4, Elp5 and Elp6. The elongator complex associates with and stabilizes microtubules; efficient interaction requires the full complex. Interacts with InR/Insulin-like receptor; the interaction may stabilize Elp6.

The protein localises to the cytoplasm. It localises to the nucleus. It is found in the cytoskeleton. The protein resides in the spindle. Its pathway is tRNA modification; 5-methoxycarbonylmethyl-2-thiouridine-tRNA biosynthesis. In terms of biological role, component of the elongator complex, which is required for multiple tRNA modifications, including mcm5U (5-methoxycarbonylmethyl uridine), mcm5s2U (5-methoxycarbonylmethyl-2-thiouridine), and ncm5U (5-carbamoylmethyl uridine). The elongator complex catalyzes formation of carboxymethyluridine in the wobble base at position 34 in tRNAs. Binding by the elongator complex stabilizes microtubules and promotes their growth. This induces central spindle asymmetry, promoting polarized signaling endosome trafficking during asymmetric cell division and cell fate assignation of sensory organ precursor cells. Required in germ line cells for microtubule organization involved in oocyte polarization and chromosome organization. Involved in InR-TOR (insulin-like receptor-target of rapamycin) signaling regulation of cellular metabolism, autophagy and apoptosis. The polypeptide is Elongator complex protein 6 (Drosophila melanogaster (Fruit fly)).